Here is a 349-residue protein sequence, read N- to C-terminus: MDENKQKALAAALGQIEKQFGKGSIMRLGDNRAMDVETISTGSLSLDIALGAGGLPMGRIVEIFGPESSGKTTLTLELIAAAQREGKTCAFIDAEHALDPVYAKKLGVNIDQLLVSQPDTGEQALEICDALARSGAVDVIVVDSVAALTPKAEIEGEMGDSHMGLQARMLSQAMRKLTGNLKQSNCMCIFINQIRMKIGVMFGNPETTTGGNALKFYASVRLDIRRTGAIKEGDEVVGNETRIKVVKNKIAAPFKEANTQIMYGQGFNREGELIDLGVKCKLIEKSGAWYSYNGDKIGQGKANACKYLKENVDVAKVLDTKLREMLLSPANINDESAELVEEMPEQEEF.

65-72 (GPESSGKT) is an ATP binding site.

It belongs to the RecA family.

Its subcellular location is the cytoplasm. In terms of biological role, can catalyze the hydrolysis of ATP in the presence of single-stranded DNA, the ATP-dependent uptake of single-stranded DNA by duplex DNA, and the ATP-dependent hybridization of homologous single-stranded DNAs. It interacts with LexA causing its activation and leading to its autocatalytic cleavage. This Vibrio vulnificus (strain CMCP6) protein is Protein RecA.